The primary structure comprises 142 residues: Transcription antitermination protein NusB (142 aa).

Belongs to the NusB family.

Functionally, involved in transcription antitermination. Required for transcription of ribosomal RNA (rRNA) genes. Binds specifically to the boxA antiterminator sequence of the ribosomal RNA (rrn) operons. This chain is Transcription antitermination protein NusB, found in Streptococcus uberis (strain ATCC BAA-854 / 0140J).